The primary structure comprises 382 residues: MAKRDYYEILGVSKNATKDEIKKAYRKLSKQYHPDVNKAPDAAEKFKEIKEAYEVLSDDEKRARYDRFGHADPNETFGGGGFQGGGFDFGGFSGFGGFEDIFETFFGAGPRRRASGPRKGADVEYMMTLTFEEAAFGKETEIEIPREETCDTCQGSGAKPGTSPTSCPHCHGSGQVTSEQATPFGRIVNRRTCPVCGGTGRYIPEKCPTCGGTGRVKRRKKIHVKIPAGVDDGQQLRVAGQGEPGVNGGPPGDLYIIFRVEPHEFFKRDGDDIYCEVPLSFAQAALGDEIEVPTLHGHVKLKIPAGTQTGTRFRLKGKGVPNVRGYGQGDQHVIVRVVTPTKLTEKQKQLLREFERLGGDTMHDGPHGRFFEKVKKAFKGEA.

The J domain occupies aspartate 5–glycine 69. The CR-type zinc finger occupies glycine 137–arginine 219. Cysteine 150, cysteine 153, cysteine 167, cysteine 170, cysteine 193, cysteine 196, cysteine 207, and cysteine 210 together coordinate Zn(2+). CXXCXGXG motif repeat units follow at residues cysteine 150–glycine 157, cysteine 167–glycine 174, cysteine 193–glycine 200, and cysteine 207–glycine 214. A disordered region spans residues glutamine 154–glutamine 175.

The protein belongs to the DnaJ family. In terms of assembly, homodimer. It depends on Zn(2+) as a cofactor.

It localises to the cytoplasm. In terms of biological role, participates actively in the response to hyperosmotic and heat shock by preventing the aggregation of stress-denatured proteins and by disaggregating proteins, also in an autonomous, DnaK-independent fashion. Unfolded proteins bind initially to DnaJ; upon interaction with the DnaJ-bound protein, DnaK hydrolyzes its bound ATP, resulting in the formation of a stable complex. GrpE releases ADP from DnaK; ATP binding to DnaK triggers the release of the substrate protein, thus completing the reaction cycle. Several rounds of ATP-dependent interactions between DnaJ, DnaK and GrpE are required for fully efficient folding. Also involved, together with DnaK and GrpE, in the DNA replication of plasmids through activation of initiation proteins. The sequence is that of Chaperone protein DnaJ from Geobacillus kaustophilus (strain HTA426).